The sequence spans 189 residues: MERISWNQYFMAQSHLLALRSTCPRLSVGATIVRDKRMIAGGYNGSIAGGVHCADEGCLMIDDHCARTIHAEMNAILQCSKFGVPTDGAEIYVTHYPCIQCCKSIIQAGIKTVYYAEDYKTHPYAQELFEQAGVTVEQVELDEMIVDLKNREKLSFVAGLIGKLADAGLAEEELKKIHEQANTLFTSYV.

In terms of domain architecture, CMP/dCMP-type deaminase spans 5-132 (SWNQYFMAQS…PYAQELFEQA (128 aa)). Position 70 (His-70) interacts with Zn(2+). The active-site Proton donor is the Glu-72. Zn(2+) contacts are provided by Cys-98 and Cys-101.

It belongs to the cytidine and deoxycytidylate deaminase family. Requires Zn(2+) as cofactor.

Its function is as follows. Dispensable for transformability. In Bacillus subtilis (strain 168), this protein is ComE operon protein 2 (comEB).